A 698-amino-acid chain; its full sequence is Elongation factor G (698 aa).

The tr-type G domain occupies 8–284 (ANVRNIGIMA…AVVDFLPSPL (277 aa)). GTP-binding positions include 17–24 (AHIDAGKT), 81–85 (DTPGH), and 135–138 (NKLD). The segment at 289-309 (IEGTGTDGETPLQRKPSTSEP) is disordered.

Belongs to the TRAFAC class translation factor GTPase superfamily. Classic translation factor GTPase family. EF-G/EF-2 subfamily.

Its subcellular location is the cytoplasm. Its function is as follows. Catalyzes the GTP-dependent ribosomal translocation step during translation elongation. During this step, the ribosome changes from the pre-translocational (PRE) to the post-translocational (POST) state as the newly formed A-site-bound peptidyl-tRNA and P-site-bound deacylated tRNA move to the P and E sites, respectively. Catalyzes the coordinated movement of the two tRNA molecules, the mRNA and conformational changes in the ribosome. The protein is Elongation factor G of Salinispora arenicola (strain CNS-205).